The chain runs to 526 residues: Exodeoxyribonuclease 7 large subunit (526 aa).

Positions 496–526 (GAMTTEGGTPPAGAKKRSAKPADPTKQGSLF) are disordered.

The protein belongs to the XseA family. Heterooligomer composed of large and small subunits.

Its subcellular location is the cytoplasm. It carries out the reaction Exonucleolytic cleavage in either 5'- to 3'- or 3'- to 5'-direction to yield nucleoside 5'-phosphates.. Functionally, bidirectionally degrades single-stranded DNA into large acid-insoluble oligonucleotides, which are then degraded further into small acid-soluble oligonucleotides. This is Exodeoxyribonuclease 7 large subunit from Rhizobium etli (strain CIAT 652).